Reading from the N-terminus, the 125-residue chain is MIQIDFEKMGGLVPAIIQDYQTNEVLMVAFIDEKALKLTLETGKTWLFSRSRNKHWMKGEQSGNTQEVQEVYTDCDADALVIKVKQNGGAACHTGNRSCFYVRWEDGAWVEHSEPLFDPDEVYKK.

Asp-74 contacts Mg(2+). Cys-75 contributes to the Zn(2+) binding site. Mg(2+)-binding residues include Asp-76 and Asp-78. Zn(2+)-binding residues include Cys-92 and Cys-99.

Belongs to the PRA-CH family. Homodimer. The cofactor is Mg(2+). It depends on Zn(2+) as a cofactor.

Its subcellular location is the cytoplasm. The catalysed reaction is 1-(5-phospho-beta-D-ribosyl)-5'-AMP + H2O = 1-(5-phospho-beta-D-ribosyl)-5-[(5-phospho-beta-D-ribosylamino)methylideneamino]imidazole-4-carboxamide. The protein operates within amino-acid biosynthesis; L-histidine biosynthesis; L-histidine from 5-phospho-alpha-D-ribose 1-diphosphate: step 3/9. Catalyzes the hydrolysis of the adenine ring of phosphoribosyl-AMP. The chain is Phosphoribosyl-AMP cyclohydrolase from Syntrophotalea carbinolica (strain DSM 2380 / NBRC 103641 / GraBd1) (Pelobacter carbinolicus).